Consider the following 168-residue polypeptide: Endoribonuclease YbeY (168 aa).

Histidine 123, histidine 127, and histidine 133 together coordinate Zn(2+).

This sequence belongs to the endoribonuclease YbeY family. Zn(2+) is required as a cofactor.

The protein resides in the cytoplasm. Single strand-specific metallo-endoribonuclease involved in late-stage 70S ribosome quality control and in maturation of the 3' terminus of the 16S rRNA. The polypeptide is Endoribonuclease YbeY (Francisella tularensis subsp. tularensis (strain SCHU S4 / Schu 4)).